The sequence spans 431 residues: Histidinol dehydrogenase (431 aa).

Residues Y131, Q193, and N216 each coordinate NAD(+). Residues S239, Q261, and H264 each contribute to the substrate site. Residues Q261 and H264 each coordinate Zn(2+). Residues E329 and H330 each act as proton acceptor in the active site. Positions 330, 363, 417, and 422 each coordinate substrate. A Zn(2+)-binding site is contributed by D363. H422 is a binding site for Zn(2+).

The protein belongs to the histidinol dehydrogenase family. It depends on Zn(2+) as a cofactor.

The enzyme catalyses L-histidinol + 2 NAD(+) + H2O = L-histidine + 2 NADH + 3 H(+). Its pathway is amino-acid biosynthesis; L-histidine biosynthesis; L-histidine from 5-phospho-alpha-D-ribose 1-diphosphate: step 9/9. Catalyzes the sequential NAD-dependent oxidations of L-histidinol to L-histidinaldehyde and then to L-histidine. The polypeptide is Histidinol dehydrogenase (Clostridium acetobutylicum (strain ATCC 824 / DSM 792 / JCM 1419 / IAM 19013 / LMG 5710 / NBRC 13948 / NRRL B-527 / VKM B-1787 / 2291 / W)).